Reading from the N-terminus, the 417-residue chain is Probable histone-binding protein lin-53 (417 aa).

WD repeat units follow at residues 118–158 (NHEG…AVPR), 170–210 (GHTK…NVAG), 220–260 (GHES…PGHC), 263–303 (AHSA…MKLH), 307–347 (SHRD…EDQS), and 364–404 (GHTA…YNEV).

It belongs to the WD repeat RBAP46/RBAP48/MSI1 family. In terms of assembly, binds directly to helix 1 of the histone fold of histone H4, a region that is not accessible when H4 is in chromatin. Probable component of a NuRD-like complex, composed of at least lin-53 and hda-1. Interacts with lin-35. Interacts with hda-1; the interaction is direct. Component of the DRM complex, at least composed of lin-9, lin-35, lin-37, lin-52, lin-53, lin-54- dpl-1 and efl-1. Interacts with hcp-3.

The protein resides in the nucleus. Its subcellular location is the chromosome. It localises to the centromere. Its function is as follows. Core histone-binding subunit that may target chromatin assembly factors, chromatin remodeling factors and histone deacetylases to their histone substrates in a manner that is regulated by nucleosomal DNA. Required for hcp-3 and his-1 stabilization, localization of hcp-3 to centromeres and for proper chromosome segregation. Synthetic multivulva class B (synMuvB) protein. SynMuvB proteins are required to repress the induction of vulval development by Ras signaling and probably act by forming the multiprotein DRM complex that represses transcription. This is Probable histone-binding protein lin-53 from Caenorhabditis elegans.